Reading from the N-terminus, the 160-residue chain is SsrA-binding protein (160 aa).

A disordered region spans residues 131–160 (KKEYDKRHTERERDSDRELQRAVRTKGKED).

Belongs to the SmpB family.

Its subcellular location is the cytoplasm. In terms of biological role, required for rescue of stalled ribosomes mediated by trans-translation. Binds to transfer-messenger RNA (tmRNA), required for stable association of tmRNA with ribosomes. tmRNA and SmpB together mimic tRNA shape, replacing the anticodon stem-loop with SmpB. tmRNA is encoded by the ssrA gene; the 2 termini fold to resemble tRNA(Ala) and it encodes a 'tag peptide', a short internal open reading frame. During trans-translation Ala-aminoacylated tmRNA acts like a tRNA, entering the A-site of stalled ribosomes, displacing the stalled mRNA. The ribosome then switches to translate the ORF on the tmRNA; the nascent peptide is terminated with the 'tag peptide' encoded by the tmRNA and targeted for degradation. The ribosome is freed to recommence translation, which seems to be the essential function of trans-translation. The polypeptide is SsrA-binding protein (Pseudomonas fluorescens (strain ATCC BAA-477 / NRRL B-23932 / Pf-5)).